Consider the following 154-residue polypeptide: Immunity protein YwqK (154 aa).

Probably interacts with cognate toxin YwqJ but not with other non-cognate LXG toxins. The interaction inhibits the toxic activity of YwqJ.

It localises to the cytoplasm. In terms of biological role, immunity component of one of 6 LXG toxin-immunity modules in this strain. They promote kin selection, mediate competition in biofilms, and drive spatial segregation of different strains, indicating that LXG toxins may help avoid warfare between strains in biofilms. Mediates intercellular competition during biofilm formation; disruption of the operon disadvantages the bacteria, but overexpression of the cognate immunity protein restores growth in competition with wild-type. In situ neutralizes the toxic effect of cognate toxin YqcG. Probably neutralizes the ability to inhibit growth of cognate toxin YwqJ. Probably does not have immunity protein activity on other LXG toxins. The chain is Immunity protein YwqK (ywqK) from Bacillus subtilis (strain 168).